The primary structure comprises 431 residues: Glutamate-1-semialdehyde 2,1-aminomutase (431 aa).

Lys269 is modified (N6-(pyridoxal phosphate)lysine).

The protein belongs to the class-III pyridoxal-phosphate-dependent aminotransferase family. HemL subfamily. As to quaternary structure, homodimer. Requires pyridoxal 5'-phosphate as cofactor.

The protein localises to the cytoplasm. It carries out the reaction (S)-4-amino-5-oxopentanoate = 5-aminolevulinate. It functions in the pathway porphyrin-containing compound metabolism; protoporphyrin-IX biosynthesis; 5-aminolevulinate from L-glutamyl-tRNA(Glu): step 2/2. It participates in porphyrin-containing compound metabolism; chlorophyll biosynthesis. This Chlorobium chlorochromatii (strain CaD3) protein is Glutamate-1-semialdehyde 2,1-aminomutase.